The sequence spans 344 residues: Protein RecA (344 aa).

65 to 72 (GPESSGKT) is a binding site for ATP. The span at 323 to 337 (ELREKFQPAEAPREA) shows a compositional bias: basic and acidic residues. The tract at residues 323-344 (ELREKFQPAEAPREAGDDEDKE) is disordered.

Belongs to the RecA family.

The protein localises to the cytoplasm. Can catalyze the hydrolysis of ATP in the presence of single-stranded DNA, the ATP-dependent uptake of single-stranded DNA by duplex DNA, and the ATP-dependent hybridization of homologous single-stranded DNAs. It interacts with LexA causing its activation and leading to its autocatalytic cleavage. The chain is Protein RecA from Xanthomonas axonopodis pv. citri (strain 306).